The primary structure comprises 629 residues: tRNA uridine 5-carboxymethylaminomethyl modification enzyme MnmG (629 aa).

Residues 13 to 18 (GGGHAG), valine 125, and serine 180 contribute to the FAD site. 273-287 (GPRYCPSIEDKVMRF) provides a ligand contact to NAD(+). Glutamine 370 serves as a coordination point for FAD.

This sequence belongs to the MnmG family. As to quaternary structure, homodimer. Heterotetramer of two MnmE and two MnmG subunits. FAD is required as a cofactor.

It is found in the cytoplasm. Its function is as follows. NAD-binding protein involved in the addition of a carboxymethylaminomethyl (cmnm) group at the wobble position (U34) of certain tRNAs, forming tRNA-cmnm(5)s(2)U34. This chain is tRNA uridine 5-carboxymethylaminomethyl modification enzyme MnmG, found in Klebsiella pneumoniae subsp. pneumoniae (strain ATCC 700721 / MGH 78578).